A 604-amino-acid polypeptide reads, in one-letter code: Glutamine--fructose-6-phosphate aminotransferase [isomerizing] (604 aa).

Catalysis depends on Cys-2, which acts as the Nucleophile; for GATase activity. The region spanning 2-218 (CGIVGVVGNR…DKELVILTKD (217 aa)) is the Glutamine amidotransferase type-2 domain. 2 SIS domains span residues 284 to 423 (IITS…ANGK) and 456 to 594 (VQAL…VDKP). Lys-599 serves as the catalytic For Fru-6P isomerization activity.

In terms of assembly, homodimer.

Its subcellular location is the cytoplasm. The enzyme catalyses D-fructose 6-phosphate + L-glutamine = D-glucosamine 6-phosphate + L-glutamate. In terms of biological role, catalyzes the first step in hexosamine metabolism, converting fructose-6P into glucosamine-6P using glutamine as a nitrogen source. This is Glutamine--fructose-6-phosphate aminotransferase [isomerizing] from Streptococcus pyogenes serotype M18 (strain MGAS8232).